The chain runs to 750 residues: von Willebrand factor A domain-containing protein DDB_G0292188 (750 aa).

One can recognise a VWFA domain in the interval 17 to 249 (EIKTVFNSDS…IKDDLLLDVV (233 aa)). Low complexity-rich tracts occupy residues 586–595 (SINDNNNSFN) and 603–645 (PFFE…SSAS). A disordered region spans residues 586 to 657 (SINDNNNSFN…PPPSQMLNEQ (72 aa)).

The sequence is that of von Willebrand factor A domain-containing protein DDB_G0292188 from Dictyostelium discoideum (Social amoeba).